Here is a 339-residue protein sequence, read N- to C-terminus: tRNA dimethylallyltransferase (339 aa).

36-43 (GPTGSGKT) contacts ATP. 38 to 43 (TGSGKT) is a substrate binding site. The tract at residues 61–64 (DSMQ) is interaction with substrate tRNA.

Belongs to the IPP transferase family. As to quaternary structure, monomer. It depends on Mg(2+) as a cofactor.

The enzyme catalyses adenosine(37) in tRNA + dimethylallyl diphosphate = N(6)-dimethylallyladenosine(37) in tRNA + diphosphate. Its function is as follows. Catalyzes the transfer of a dimethylallyl group onto the adenine at position 37 in tRNAs that read codons beginning with uridine, leading to the formation of N6-(dimethylallyl)adenosine (i(6)A). The chain is tRNA dimethylallyltransferase from Chlamydia trachomatis serovar A (strain ATCC VR-571B / DSM 19440 / HAR-13).